The chain runs to 136 residues: ATP synthase epsilon chain (136 aa).

The disordered stretch occupies residues 106–136; it reads MEGQPSSPEKLKAQQQLNEARARLQASKTAD.

The protein belongs to the ATPase epsilon chain family. As to quaternary structure, F-type ATPases have 2 components, CF(1) - the catalytic core - and CF(0) - the membrane proton channel. CF(1) has five subunits: alpha(3), beta(3), gamma(1), delta(1), epsilon(1). CF(0) has three main subunits: a, b and c.

It is found in the cellular thylakoid membrane. Functionally, produces ATP from ADP in the presence of a proton gradient across the membrane. In Synechococcus sp. (strain CC9605), this protein is ATP synthase epsilon chain.